Here is a 387-residue protein sequence, read N- to C-terminus: Exodeoxyribonuclease 7 large subunit (387 aa).

Belongs to the XseA family. In terms of assembly, heterooligomer composed of large and small subunits.

The protein resides in the cytoplasm. It carries out the reaction Exonucleolytic cleavage in either 5'- to 3'- or 3'- to 5'-direction to yield nucleoside 5'-phosphates.. Functionally, bidirectionally degrades single-stranded DNA into large acid-insoluble oligonucleotides, which are then degraded further into small acid-soluble oligonucleotides. This chain is Exodeoxyribonuclease 7 large subunit, found in Campylobacter jejuni subsp. jejuni serotype O:6 (strain 81116 / NCTC 11828).